A 663-amino-acid chain; its full sequence is MKAVVFAYHDIGCTGIEALLEAGYEIQAVFTHADDPSENRFFGSVAQLCAEHGLPVYSPEDVNHPLWVEHIKGLAPQALFSFYYRHMLKQEILDIPSAGAFNLHGSLLPAYRGRAPINWCLVNGEQLTGITLHQMTMRPDAGAIVAQQAVAIKWADTALTLHGKVRLAAKALLDAELPKLRTGDISLTPQDESRASYYGRRTPADGELHWDKSARDLYNLVRAVTQPYPGAFSFAGDRKLTVWKATHIAQDSDMLPGTILSQDPLRIACGEGVLEIVAGQAEGGLYVRGAQLARELGLVAGMRLGAKASSALRKERLTRVLILGVNGFIGNHLTERLLKDGRYEIYGLDISASALGRFIDHPHFHFVEGDISIHTEWIEYHIKKCDVILPLVAIATPIEYTRNPLRVFELDFEENLKIVRYCVKYNKRIIFPSTSEVYGMCDDHSFDEDESRLIVGPIHKQRWIYSVSKQLLDRVIWAYGKKEGLNFTLFRPFNWMGPRLDSLDSARIGSSRAITQLILNLVDGTPIQLVDGGAQKRCFTDIEDGIEALFRIIENKGNRCDGQIINIGSPDNEASILQMAEVLLGKFEAHPLRHHFPPFAGFKRVESKSFYGDGYQDVSHRRPSIKNARRLLDWEPTIEMEETIGKTLDFFLQGAVSTGVEHD.

Residues 1–304 (MKAVVFAYHD…ELGLVAGMRL (304 aa)) are formyltransferase ArnAFT. Histidine 104 functions as the Proton donor; for formyltransferase activity in the catalytic mechanism. Residues arginine 114 and 136–140 (TMRPD) each bind (6R)-10-formyltetrahydrofolate. The dehydrogenase ArnADH stretch occupies residues 316-663 (RLTRVLILGV…GAVSTGVEHD (348 aa)). NAD(+) contacts are provided by residues aspartate 349 and 370–371 (DI). Residues alanine 395, tyrosine 400, and 434 to 435 (TS) each bind UDP-alpha-D-glucuronate. Residue glutamate 436 is the Proton acceptor; for decarboxylase activity of the active site. UDP-alpha-D-glucuronate is bound by residues arginine 462, asparagine 494, 528–537 (QLVDGGAQKR), and tyrosine 615. The active-site Proton donor; for decarboxylase activity is the arginine 621.

It in the N-terminal section; belongs to the Fmt family. UDP-L-Ara4N formyltransferase subfamily. In the C-terminal section; belongs to the NAD(P)-dependent epimerase/dehydratase family. UDP-glucuronic acid decarboxylase subfamily. In terms of assembly, homohexamer, formed by a dimer of trimers.

It catalyses the reaction UDP-alpha-D-glucuronate + NAD(+) = UDP-beta-L-threo-pentopyranos-4-ulose + CO2 + NADH. The catalysed reaction is UDP-4-amino-4-deoxy-beta-L-arabinose + (6R)-10-formyltetrahydrofolate = UDP-4-deoxy-4-formamido-beta-L-arabinose + (6S)-5,6,7,8-tetrahydrofolate + H(+). It participates in nucleotide-sugar biosynthesis; UDP-4-deoxy-4-formamido-beta-L-arabinose biosynthesis; UDP-4-deoxy-4-formamido-beta-L-arabinose from UDP-alpha-D-glucuronate: step 1/3. Its pathway is nucleotide-sugar biosynthesis; UDP-4-deoxy-4-formamido-beta-L-arabinose biosynthesis; UDP-4-deoxy-4-formamido-beta-L-arabinose from UDP-alpha-D-glucuronate: step 3/3. The protein operates within bacterial outer membrane biogenesis; lipopolysaccharide biosynthesis. Functionally, bifunctional enzyme that catalyzes the oxidative decarboxylation of UDP-glucuronic acid (UDP-GlcUA) to UDP-4-keto-arabinose (UDP-Ara4O) and the addition of a formyl group to UDP-4-amino-4-deoxy-L-arabinose (UDP-L-Ara4N) to form UDP-L-4-formamido-arabinose (UDP-L-Ara4FN). The modified arabinose is attached to lipid A and is required for resistance to polymyxin and cationic antimicrobial peptides. This chain is Bifunctional polymyxin resistance protein ArnA, found in Aeromonas salmonicida (strain A449).